The sequence spans 143 residues: Potassium voltage-gated channel subfamily E regulatory beta subunit 5 (143 aa).

Asn-2 and Asn-25 each carry an N-linked (GlcNAc...) asparagine glycan. The helical transmembrane segment at 61–81 (LYILLIMIFYACLAGGLILAY) threads the bilayer. The Cytoplasmic portion of the chain corresponds to 82–143 (TRSRKLVEAK…PALAQGAERV (62 aa)).

This sequence belongs to the potassium channel KCNE family. Interacts with KCNQ1; impairs KCNQ1 localization in lipid rafts and only conducts current upon strong and continued depolarization. As to expression, detected in embryonal dorsal root and nerve ganglia, in the somites and in myoepicardial layer of the developing heart wall. Detected at lower levels in the central nervous system (CNS) and in developing limb.

It localises to the membrane. Potassium channel ancillary subunit that is essential for generation of some native K(+) currents by virtue of formation of heteromeric ion channel complex with voltage-gated potassium (Kv) channel pore-forming alpha subunits. Functions as an inhibitory beta-subunit of the repolarizing cardiac potassium ion channel KCNQ1. This Mus musculus (Mouse) protein is Potassium voltage-gated channel subfamily E regulatory beta subunit 5 (Kcne5).